The chain runs to 173 residues: Transcription factor HES-2 (173 aa).

Residues 13-70 (LRKSLKPLLEKRRRARINQSLSQLKGLILPLLGRENSNCSKLEKADVLEMTVRFLQEL) enclose the bHLH domain. An Orange domain is found at 86–119 (YREGYSACVARLARVLPACRVLEPAVSARLLEHL). Residues 128–173 (LDGGRAGDSSGPSAPAPAPASAPEPASAPVPSPPSPPCGPGLWRPW) form a disordered region. Over residues 141 to 166 (APAPAPASAPEPASAPVPSPPSPPCG) the composition is skewed to pro residues. A WRPW motif motif is present at residues 170–173 (WRPW).

Transcription repression requires formation of a complex with a corepressor protein of the Groucho/TLE family. In terms of tissue distribution, expressed in placenta, pancreatic cancer, colon cancer with RER, cervical cancer, and in head and neck tumors.

It localises to the nucleus. Functionally, transcriptional repressor of genes that require a bHLH protein for their transcription. This is Transcription factor HES-2 (HES2) from Homo sapiens (Human).